The chain runs to 129 residues: Small ribosomal subunit protein uS11 (129 aa).

This sequence belongs to the universal ribosomal protein uS11 family. In terms of assembly, part of the 30S ribosomal subunit. Interacts with proteins S7 and S18. Binds to IF-3.

In terms of biological role, located on the platform of the 30S subunit, it bridges several disparate RNA helices of the 16S rRNA. Forms part of the Shine-Dalgarno cleft in the 70S ribosome. This chain is Small ribosomal subunit protein uS11, found in Sinorhizobium medicae (strain WSM419) (Ensifer medicae).